We begin with the raw amino-acid sequence, 468 residues long: ERO1-like protein alpha (468 aa).

Residues 1 to 23 (MGRRWGFLIGFLVAVGLLGLGHG) form the signal peptide. 8 disulfide bridges follow: Cys35/Cys48, Cys37/Cys46, Cys85/Cys391, Cys94/Cys99, Cys94/Cys131, Cys99/Cys104, Cys208/Cys241, and Cys394/Cys397. Phosphoserine occurs at positions 106, 143, and 145. Residues Arg187, Thr189, and Trp200 each contribute to the FAD site. Residues Ser252 and His255 each coordinate FAD. Asn280 carries an N-linked (GlcNAc...) asparagine glycan. Arg287 and Arg300 together coordinate FAD. The N-linked (GlcNAc...) asparagine glycan is linked to Asn384.

The protein belongs to the EROs family. As to quaternary structure, predominantly monomer. May function both as a monomer and a homodimer. Interacts with PDILT. Interacts with ERP44; the interaction results in retention of ERO1A in the endoplasmic reticulum. FAD serves as cofactor. In terms of processing, the Cys-94/Cys-99 and Cys-394/Cys-397 disulfide bonds constitute the redox-active center. The Cys-94/Cys-99 disulfide bond may accept electron from P4HB and funnel them to the active site disulfide Cys-394/Cys-397. The regulatory Cys-99/Cys-104 disulfide bond stabilizes the other regulatory bond Cys-94/Cys-131. Post-translationally, phosphorylated on Ser-145 by FAM20C in the Golgi which increases its enzymatic activity. Phosphorylation is induced by lactation. It is also induced by hypoxia and reductive stress.

Its subcellular location is the endoplasmic reticulum membrane. It localises to the golgi apparatus lumen. It is found in the secreted. The protein localises to the cell projection. The protein resides in the dendrite. With respect to regulation, enzyme activity is tightly regulated to prevent the accumulation of reactive oxygen species in the endoplasmic reticulum. Reversibly down-regulated by the formation of disulfide bonds between the active site Cys-94 and Cys-131, and between Cys-99 and Cys-104. Glutathione may be required to regulate its activity in the endoplasmic reticulum. Oxidoreductase involved in disulfide bond formation in the endoplasmic reticulum. Efficiently reoxidizes P4HB/PDI, the enzyme catalyzing protein disulfide formation, in order to allow P4HB to sustain additional rounds of disulfide formation. Following P4HB reoxidation, passes its electrons to molecular oxygen via FAD, leading to the production of reactive oxygen species (ROS) in the cell. Required for the proper folding of immunoglobulins. Plays an important role in ER stress-induced, CHOP-dependent apoptosis by activating the inositol 1,4,5-trisphosphate receptor IP3R1. In Bos taurus (Bovine), this protein is ERO1-like protein alpha.